A 158-amino-acid chain; its full sequence is Serglycin (158 aa).

A signal peptide spans 1–27 (MMQKLLKCSRLVLALALILVLESSVQG). C40 and C49 are oxidised to a cystine. S94 and S96 each carry an O-linked (Xyl...) (glycosaminoglycan) serine glycan. 9 tandem repeats follow at residues 94-95 (SG), 96-97 (SG), 98-99 (FG), 100-101 (SG), 102-103 (SG), 104-105 (SG), 106-107 (SG), 108-109 (SG), and 110-111 (SG). The interval 94–111 (SGSGFGSGSGSGSGSGSG) is 9 X 2 AA tandem repeats of [SF]-G. O-linked (Xyl...) (glycosaminoglycan) serine glycosylation is found at S100, S102, S104, S106, S108, and S110. Residues 134 to 158 (RSLDRNLPSDSQDLGQHGLEEDFML) are disordered.

Belongs to the serglycin family. Binds to activated CD44 and to GZMB. O-glycosylated; contains chondroitin sulfate and heparan sulfate.

The protein resides in the cytoplasmic granule. Its subcellular location is the cytolytic granule. It localises to the secreted. The protein localises to the extracellular space. It is found in the golgi apparatus. Functionally, plays a role in formation of mast cell secretory granules and mediates storage of various compounds in secretory vesicles. Required for storage of some proteases in both connective tissue and mucosal mast cells and for storage of granzyme B in T-lymphocytes. Plays a role in localizing neutrophil elastase in azurophil granules of neutrophils. Mediates processing of MMP2. Plays a role in cytotoxic cell granule-mediated apoptosis by forming a complex with granzyme B which is delivered to cells by perforin to induce apoptosis. Regulates the secretion of TNF-alpha and may also regulate protease secretion. Inhibits bone mineralization. In Homo sapiens (Human), this protein is Serglycin (SRGN).